We begin with the raw amino-acid sequence, 330 residues long: MKTAYIAKQRQISFVKSHFSRQLEERLGLIEVQAPILSRVGDGTQDNLSGCEKAVQVKVKALPDAQFEVVHSLAKWKRQTLGQHDFSAGEGLYTHMKALRPDEERLSPLHSVYVDQWDWERVMGDGERQFSTLKSTVEAIWAGIKATEAAVSEEFGLAPFLPDQIHFVHSQELLSRYPDLDAKGRERAIAKDLGAVFLVGIGGKLSDGHRHDVRAPDYDDWSTPSELGHAGLNGDILVWNPVLEDAFELSSMGIRVDADTLKHQLALTGDEDRLQLEWHQALLRGEMPQTIGGGIGQSRLTMLLLQLPHIGQVQCGVWPAAVRESVPSLL.

Belongs to the class-II aminoacyl-tRNA synthetase family. AsnA subfamily.

It is found in the cytoplasm. The enzyme catalyses L-aspartate + NH4(+) + ATP = L-asparagine + AMP + diphosphate + H(+). The protein operates within amino-acid biosynthesis; L-asparagine biosynthesis; L-asparagine from L-aspartate (ammonia route): step 1/1. This is Aspartate--ammonia ligase from Escherichia coli O8 (strain IAI1).